The sequence spans 224 residues: LOB domain-containing protein 15 (224 aa).

One can recognise an LOB domain in the interval 44 to 145 (TPCAACKLLR…AELTAVRSEI (102 aa)). The interval 171 to 224 (SGGVSVIAPPPQRPTTPPQPTTAHPPSPSSCVFSQPTTRDLEYGNIESENNYFG) is disordered. Residues 178 to 198 (APPPQRPTTPPQPTTAHPPSP) are compositionally biased toward pro residues.

The protein belongs to the LOB domain-containing protein family. Expressed in young shoots, roots, stems, leaves and flowers.

This Arabidopsis thaliana (Mouse-ear cress) protein is LOB domain-containing protein 15 (LBD15).